The primary structure comprises 338 residues: Glycerol-3-phosphate dehydrogenase [NAD(P)+] (338 aa).

NADPH contacts are provided by S14, Y15, H35, and K109. 3 residues coordinate sn-glycerol 3-phosphate: K109, G138, and T140. A142 contacts NADPH. Sn-glycerol 3-phosphate contacts are provided by K194, D247, S257, R258, and N259. K194 (proton acceptor) is an active-site residue. Residue R258 participates in NADPH binding. NADPH is bound by residues V282 and E284.

It belongs to the NAD-dependent glycerol-3-phosphate dehydrogenase family.

It localises to the cytoplasm. The enzyme catalyses sn-glycerol 3-phosphate + NAD(+) = dihydroxyacetone phosphate + NADH + H(+). It carries out the reaction sn-glycerol 3-phosphate + NADP(+) = dihydroxyacetone phosphate + NADPH + H(+). The protein operates within membrane lipid metabolism; glycerophospholipid metabolism. Its function is as follows. Catalyzes the reduction of the glycolytic intermediate dihydroxyacetone phosphate (DHAP) to sn-glycerol 3-phosphate (G3P), the key precursor for phospholipid synthesis. This Sodalis glossinidius (strain morsitans) protein is Glycerol-3-phosphate dehydrogenase [NAD(P)+].